The following is a 484-amino-acid chain: MALKSKPGIMNITPGSKISVIRSKRVIQANTISSCDIIISDGKISSVLAWGKHVTSGAKLLDVGDLVVMAGIIDPHVHVNEPGRTDWEGYRTATLAAAAGGITAIVDMPLNSLPPTTSVTNFHTKLQAAKRQCYVDVAFWGGVIPDNQVELIPMLQAGVAGFKCFLINSGVPEFPHVSVTDLHTAMSELQGTNSVLLFHAELEIAKPAPEIGDSTLYQTFLDSRPDDMEIAAVQLVADLCQQYKVRCHIVHLSSAQSLTIIRKAKEAGAPLTVETTHHYLSLSSEHIPPGATYFKCCPPVRGHRNKEALWNALLQGHIDMVVSDHSPCTPDLKLLKEGDYMKAWGGISSLQFGLPLFWTSARTRGFSLTDVSQLLSSNTAKLCGLGIVKEPLKWVMMLIWSSGILTKSFRCKKMIFITRISSPHIWDSFFKEKSWLLLFEGLLFISKGSMLPNQLENLFLYTLWSLVKPVHPVHPIIRKNLPHI.

Zn(2+)-binding residues include histidine 76, histidine 78, lysine 163, histidine 199, histidine 251, and aspartate 324. An N6-carboxylysine modification is found at lysine 163.

It belongs to the metallo-dependent hydrolases superfamily. Allantoinase family. In terms of assembly, homotetramer. Requires Zn(2+) as cofactor. Post-translationally, carboxylation allows a single lysine to coordinate two zinc ions. As to expression, liver and kidney.

It localises to the mitochondrion. It catalyses the reaction (S)-allantoin + H2O = allantoate + H(+). The protein operates within nitrogen metabolism; (S)-allantoin degradation; allantoate from (S)-allantoin: step 1/1. This Aquarana catesbeiana (American bullfrog) protein is Allantoinase, mitochondrial (ALN).